We begin with the raw amino-acid sequence, 366 residues long: 3-isopropylmalate dehydrogenase (366 aa).

78–91 (GPKWEDLPSHLQPE) contacts NAD(+). Positions 99, 109, 138, and 227 each coordinate substrate. Residues D227, D251, and D255 each coordinate Mg(2+). An NAD(+)-binding site is contributed by 285–297 (GSAPDIKGKNIAN).

Belongs to the isocitrate and isopropylmalate dehydrogenases family. LeuB type 1 subfamily. As to quaternary structure, homodimer. Mg(2+) serves as cofactor. It depends on Mn(2+) as a cofactor.

It localises to the cytoplasm. The enzyme catalyses (2R,3S)-3-isopropylmalate + NAD(+) = 4-methyl-2-oxopentanoate + CO2 + NADH. It functions in the pathway amino-acid biosynthesis; L-leucine biosynthesis; L-leucine from 3-methyl-2-oxobutanoate: step 3/4. Functionally, catalyzes the oxidation of 3-carboxy-2-hydroxy-4-methylpentanoate (3-isopropylmalate) to 3-carboxy-4-methyl-2-oxopentanoate. The product decarboxylates to 4-methyl-2 oxopentanoate. In Buchnera aphidicola subsp. Baizongia pistaciae (strain Bp), this protein is 3-isopropylmalate dehydrogenase.